The chain runs to 555 residues: CTP synthase (555 aa).

The interval 1–279 (MATNRAKSST…DNYIIRRLNL (279 aa)) is amidoligase domain. Ser21 contacts CTP. Ser21 contacts UTP. ATP is bound by residues 22-27 (SLGKGL) and Asp79. Residues Asp79 and Glu153 each contribute to the Mg(2+) site. CTP contacts are provided by residues 160-162 (DIE), 200-205 (KTKPTQ), and Lys236. Residues 200 to 205 (KTKPTQ) and Lys236 contribute to the UTP site. The 250-residue stretch at 304-553 (TIGIVGKYID…VDAALKHQAG (250 aa)) folds into the Glutamine amidotransferase type-1 domain. L-glutamine is bound at residue Gly367. Residue Cys394 is the Nucleophile; for glutamine hydrolysis of the active site. L-glutamine is bound by residues 395-398 (LGLQ), Glu417, and Arg478. Active-site residues include His526 and Glu528.

The protein belongs to the CTP synthase family. As to quaternary structure, homotetramer.

It catalyses the reaction UTP + L-glutamine + ATP + H2O = CTP + L-glutamate + ADP + phosphate + 2 H(+). It carries out the reaction L-glutamine + H2O = L-glutamate + NH4(+). The enzyme catalyses UTP + NH4(+) + ATP = CTP + ADP + phosphate + 2 H(+). Its pathway is pyrimidine metabolism; CTP biosynthesis via de novo pathway; CTP from UDP: step 2/2. Its activity is regulated as follows. Allosterically activated by GTP, when glutamine is the substrate; GTP has no effect on the reaction when ammonia is the substrate. The allosteric effector GTP functions by stabilizing the protein conformation that binds the tetrahedral intermediate(s) formed during glutamine hydrolysis. Inhibited by the product CTP, via allosteric rather than competitive inhibition. In terms of biological role, catalyzes the ATP-dependent amination of UTP to CTP with either L-glutamine or ammonia as the source of nitrogen. Regulates intracellular CTP levels through interactions with the four ribonucleotide triphosphates. This chain is CTP synthase, found in Corynebacterium jeikeium (strain K411).